The primary structure comprises 508 residues: MWELLAFLLLAIAYFFRPKVKCPGAKYPKSLPYLPLVGSLPFLPRHGHPHVNFFKLQKKYGPIYSLRMGTKTTVMVGHYQLAKEVLIKKGKEFSGRPQVATLNILSDNQKGVAFADHGAPWQLHRKLVRAAFALFKDGNQKLEKIICHETSLLCDLLATQNGQTIDLSSPLFLAVTNVICWICFNSSYMKGDPALETMQNYHKGILETLEKDNVVDIFPALKIFPNKSLEKMRHCVNIRNELLSKIFEKHKENFNSDSITSMLDLLIQAKKNSDNNNTGPDQDSKLLSDKHILATIGDIFGAGVETTTSVVKWIVAFLLHDPQLKKKIQEEIDQNVGFSRTPTLSDRNRLLLLEATIREVLRIRPVAPMLIPHKALVDSSIGEFAVDDGTNVIINLWALHHNEKEWHQPDRFMPERFLDPTGSQLISPSLSYLPFGAGPRSCIGELLARQELFLFTAWLLQRFNLEVPDDGQLPSLEGHPTAVFLIDSFKVKINVRQAWREAQAEGST.

Position 442 (Cys-442) interacts with heme.

It belongs to the cytochrome P450 family. Heme is required as a cofactor.

Its subcellular location is the endoplasmic reticulum membrane. The protein localises to the microsome membrane. The enzyme catalyses a C21-steroid + reduced [NADPH--hemoprotein reductase] + O2 = a 17alpha-hydroxy-C21-steroid + oxidized [NADPH--hemoprotein reductase] + H2O + H(+). It carries out the reaction progesterone + reduced [NADPH--hemoprotein reductase] + O2 = 17alpha-hydroxyprogesterone + oxidized [NADPH--hemoprotein reductase] + H2O + H(+). The catalysed reaction is pregnenolone + reduced [NADPH--hemoprotein reductase] + O2 = 17alpha-hydroxypregnenolone + oxidized [NADPH--hemoprotein reductase] + H2O + H(+). It catalyses the reaction 17alpha-hydroxyprogesterone + reduced [NADPH--hemoprotein reductase] + O2 = androst-4-ene-3,17-dione + acetate + oxidized [NADPH--hemoprotein reductase] + H2O + 2 H(+). The enzyme catalyses 17alpha-hydroxyprogesterone + reduced [NADPH--hemoprotein reductase] + O2 = 16alpha,17alpha-dihydroxyprogesterone + oxidized [NADPH--hemoprotein reductase] + H2O + H(+). It carries out the reaction 16alpha,17alpha-dihydroxyprogesterone + reduced [NADPH--hemoprotein reductase] + O2 = 6beta,16alpha,17alpha-trihydroxyprogesterone + oxidized [NADPH--hemoprotein reductase] + H2O + H(+). The catalysed reaction is 17alpha-hydroxypregnenolone + reduced [NADPH--hemoprotein reductase] + O2 = 3beta-hydroxyandrost-5-en-17-one + acetate + oxidized [NADPH--hemoprotein reductase] + H2O + 2 H(+). It catalyses the reaction 16alpha,17alpha-dihydroxypregnenolone + reduced [NADPH--hemoprotein reductase] + O2 = 3beta,16alpha-dihydroxy-androst-5-en-17-one + acetate + oxidized [NADPH--hemoprotein reductase] + H2O + 2 H(+). The enzyme catalyses 3beta-hydroxyandrost-5-en-17-one + reduced [NADPH--hemoprotein reductase] + O2 = 3beta,16alpha-dihydroxy-androst-5-en-17-one + oxidized [NADPH--hemoprotein reductase] + H2O + H(+). It carries out the reaction androst-4-ene-3,17-dione + reduced [NADPH--hemoprotein reductase] + O2 = 16alpha-hydroxyandrost-4-ene-3,17-dione + oxidized [NADPH--hemoprotein reductase] + H2O + H(+). Its pathway is steroid hormone biosynthesis. It functions in the pathway steroid biosynthesis; glucocorticoid biosynthesis. Its activity is regulated as follows. Regulated predominantly by intracellular cAMP levels. The 17,20-lyase activity is stimulated by cytochrome b5, which acts as an allosteric effector increasing the Vmax of the lyase activity. A cytochrome P450 monooxygenase involved in corticoid and androgen biosynthesis. Catalyzes 17-alpha hydroxylation of C21 steroids, which is common for both pathways. A second oxidative step, required only for androgen synthesis, involves an acyl-carbon cleavage. The 17-alpha hydroxy intermediates, as part of adrenal glucocorticoids biosynthesis pathway, are precursors of cortisol. Hydroxylates steroid hormones, pregnenolone and progesterone to form 17-alpha hydroxy metabolites, followed by the cleavage of the C17-C20 bond to form C19 steroids, dehydroepiandrosterone (DHEA) and androstenedione. Has 16-alpha hydroxylase activity. Catalyzes 16-alpha hydroxylation of 17-alpha hydroxy pregnenolone, followed by the cleavage of the C17-C20 bond to form 16-alpha-hydroxy DHEA. Also 16-alpha hydroxylates androgens, relevant for estriol synthesis. Mechanistically, uses molecular oxygen inserting one oxygen atom into a substrate, and reducing the second into a water molecule, with two electrons provided by NADPH via cytochrome P450 reductase (CPR; NADPH-ferrihemoprotein reductase). The chain is Steroid 17-alpha-hydroxylase/17,20 lyase (CYP17A1) from Equus caballus (Horse).